The primary structure comprises 138 residues: Protein SPMIP3 (138 aa).

In Bos taurus (Bovine), this protein is Protein SPMIP3 (SPMIP3).